A 219-amino-acid polypeptide reads, in one-letter code: Leukocyte surface antigen CD53 (219 aa).

At 1–11 (MGMSSLKLLKF) the chain is on the cytoplasmic side. Residues 12–32 (VLFFFNLIFWFCGCCILGLGI) form a helical membrane-spanning segment. Over 33–54 (YLLIHSKFGVLFHNLPSLTLGN) the chain is Extracellular. Residues 55-69 (VLVIVGSVIMVVAFL) form a helical membrane-spanning segment. Topologically, residues 70–80 (GCMGSIKENKC) are cytoplasmic. Residues 81-106 (LLMSFFVLLLIILLAEVTLAILLFVY) traverse the membrane as a helical segment. Over 107–181 (EQKLKEYVAE…IQAKQWFHSN (75 aa)) the chain is Extracellular. N-linked (GlcNAc...) asparagine glycans are attached at residues asparagine 129 and asparagine 148. A helical transmembrane segment spans residues 182–206 (FLYIGITTICVCVIQVLGMSFALTL). Residues 207-219 (NCQIDKTSQVLGL) lie on the Cytoplasmic side of the membrane.

Belongs to the tetraspanin (TM4SF) family. As to quaternary structure, interacts with SCIMP. Interacts with CD45/PTPRC. Interacts with IL7R. Interacts with RBL2 and PPP2CA.

It is found in the cell membrane. The protein resides in the cell junction. The protein localises to the membrane. Its subcellular location is the synapse. Structural component of specialized membrane microdomains known as tetraspanin-enriched microdomains (TERMs), which act as platforms for receptor clustering and signaling. Participates thereby in diverse biological functions such as cell signal transduction, adhesion, migration and protein trafficking. Plays a role in the activation of monocytes and B-cells. Acts as an essential regulator of B-cell development by promoting interleukin-7 receptor/IL7R signaling. Also promotes, in B-cells, the BCR signaling by recruiting PKC to the plasma membrane in order to phosphorylate its substrates. Plays an essential role in B- and T-cells homing to lymph nodes by stabilizing L-selectin/SELL cell surface expression. Also mediates metabolic and inflammatory functions in hepatocytes and adipose tissue by promoting TNF-alpha and LPS signaling independent of the immune compartment. The sequence is that of Leukocyte surface antigen CD53 (CD53) from Bos taurus (Bovine).